Here is a 445-residue protein sequence, read N- to C-terminus: V-type proton ATPase subunit H (445 aa).

The protein belongs to the V-ATPase H subunit family. As to quaternary structure, V-ATPase is a heteromultimeric enzyme composed of a peripheral catalytic V1 complex (components A to H) attached to an integral membrane V0 proton pore complex (components: a, c, c', c'' and d).

In terms of biological role, subunit of the peripheral V1 complex of vacuolar ATPase. Subunit H activates the ATPase activity of the enzyme and couples ATPase activity to proton flow. Vacuolar ATPase is responsible for acidifying a variety of intracellular compartments in eukaryotic cells, thus providing most of the energy required for transport processes in the vacuolar system. This Dictyostelium discoideum (Social amoeba) protein is V-type proton ATPase subunit H (vatH).